A 1222-amino-acid polypeptide reads, in one-letter code: ATP-dependent helicase/nuclease subunit A (1222 aa).

In terms of domain architecture, UvrD-like helicase ATP-binding spans Q39–Q495. A60–T67 serves as a coordination point for ATP. The region spanning Q524–G810 is the UvrD-like helicase C-terminal domain.

Belongs to the helicase family. AddA subfamily. In terms of assembly, heterodimer of AddA and AddB/RexB. Requires Mg(2+) as cofactor.

It catalyses the reaction Couples ATP hydrolysis with the unwinding of duplex DNA by translocating in the 3'-5' direction.. It carries out the reaction ATP + H2O = ADP + phosphate + H(+). In terms of biological role, the heterodimer acts as both an ATP-dependent DNA helicase and an ATP-dependent, dual-direction single-stranded exonuclease. Recognizes the chi site generating a DNA molecule suitable for the initiation of homologous recombination. The AddA nuclease domain is required for chi fragment generation; this subunit has the helicase and 3' -&gt; 5' nuclease activities. This chain is ATP-dependent helicase/nuclease subunit A, found in Streptococcus pyogenes serotype M6 (strain ATCC BAA-946 / MGAS10394).